The following is a 115-amino-acid chain: NADH-ubiquinone oxidoreductase chain 3 (115 aa).

3 helical membrane passes run 3 to 23, 55 to 75, and 84 to 104; these read FVLI…ITFW, FFLV…LLPL, and LPLM…SLAY.

This sequence belongs to the complex I subunit 3 family. As to quaternary structure, core subunit of respiratory chain NADH dehydrogenase (Complex I) which is composed of 45 different subunits. Interacts with TMEM186. Interacts with TMEM242.

It is found in the mitochondrion inner membrane. It carries out the reaction a ubiquinone + NADH + 5 H(+)(in) = a ubiquinol + NAD(+) + 4 H(+)(out). Its function is as follows. Core subunit of the mitochondrial membrane respiratory chain NADH dehydrogenase (Complex I) which catalyzes electron transfer from NADH through the respiratory chain, using ubiquinone as an electron acceptor. Essential for the catalytic activity of complex I. The sequence is that of NADH-ubiquinone oxidoreductase chain 3 from Pan troglodytes (Chimpanzee).